Consider the following 1263-residue polypeptide: DNA polymerase II large subunit (1263 aa).

The segment at 1224 to 1250 (LENFNSSGNNGKKIEKKEKKAKEKPKK) is disordered. Residues 1235–1244 (KKIEKKEKKA) are compositionally biased toward basic and acidic residues.

The protein belongs to the archaeal DNA polymerase II family. As to quaternary structure, heterodimer of a large subunit and a small subunit.

It catalyses the reaction DNA(n) + a 2'-deoxyribonucleoside 5'-triphosphate = DNA(n+1) + diphosphate. It carries out the reaction Exonucleolytic cleavage in the 3'- to 5'-direction to yield nucleoside 5'-phosphates.. Possesses two activities: a DNA synthesis (polymerase) and an exonucleolytic activity that degrades single-stranded DNA in the 3'- to 5'-direction. Has a template-primer preference which is characteristic of a replicative DNA polymerase. The polypeptide is DNA polymerase II large subunit (polC) (Pyrococcus furiosus (strain ATCC 43587 / DSM 3638 / JCM 8422 / Vc1)).